A 413-amino-acid polypeptide reads, in one-letter code: Arginine biosynthesis bifunctional protein ArgJ (413 aa).

Substrate-binding residues include Thr-158, Lys-184, Thr-195, Glu-285, Asn-408, and Ser-413. The Nucleophile role is filled by Thr-195.

This sequence belongs to the ArgJ family. Heterotetramer of two alpha and two beta chains.

Its subcellular location is the cytoplasm. It carries out the reaction N(2)-acetyl-L-ornithine + L-glutamate = N-acetyl-L-glutamate + L-ornithine. The catalysed reaction is L-glutamate + acetyl-CoA = N-acetyl-L-glutamate + CoA + H(+). Its pathway is amino-acid biosynthesis; L-arginine biosynthesis; L-ornithine and N-acetyl-L-glutamate from L-glutamate and N(2)-acetyl-L-ornithine (cyclic): step 1/1. It functions in the pathway amino-acid biosynthesis; L-arginine biosynthesis; N(2)-acetyl-L-ornithine from L-glutamate: step 1/4. In terms of biological role, catalyzes two activities which are involved in the cyclic version of arginine biosynthesis: the synthesis of N-acetylglutamate from glutamate and acetyl-CoA as the acetyl donor, and of ornithine by transacetylation between N(2)-acetylornithine and glutamate. The polypeptide is Arginine biosynthesis bifunctional protein ArgJ (Brucella melitensis biotype 1 (strain ATCC 23456 / CCUG 17765 / NCTC 10094 / 16M)).